The following is a 477-amino-acid chain: ATP synthase subunit beta, chloroplastic (477 aa).

156-163 (GGAGVGKT) contacts ATP.

It belongs to the ATPase alpha/beta chains family. F-type ATPases have 2 components, CF(1) - the catalytic core - and CF(0) - the membrane proton channel. CF(1) has five subunits: alpha(3), beta(3), gamma(1), delta(1), epsilon(1). CF(0) has four main subunits: a(1), b(1), b'(1) and c(9-12).

It is found in the plastid. The protein localises to the chloroplast thylakoid membrane. The catalysed reaction is ATP + H2O + 4 H(+)(in) = ADP + phosphate + 5 H(+)(out). In terms of biological role, produces ATP from ADP in the presence of a proton gradient across the membrane. The catalytic sites are hosted primarily by the beta subunits. The chain is ATP synthase subunit beta, chloroplastic from Bigelowiella natans (Pedinomonas minutissima).